A 145-amino-acid chain; its full sequence is Lipoprotein signal peptidase (145 aa).

A run of 3 helical transmembrane segments spans residues 1-21 (MVYI…LLVM), 57-77 (YLFI…YYKT), and 79-99 (GSGM…GNLI). Active-site residues include D109 and D123. The chain crosses the membrane as a helical span at residues 115-135 (IWPVFNLADSSVVIGAALLIL).

This sequence belongs to the peptidase A8 family.

The protein resides in the cell inner membrane. It carries out the reaction Release of signal peptides from bacterial membrane prolipoproteins. Hydrolyzes -Xaa-Yaa-Zaa-|-(S,diacylglyceryl)Cys-, in which Xaa is hydrophobic (preferably Leu), and Yaa (Ala or Ser) and Zaa (Gly or Ala) have small, neutral side chains.. It functions in the pathway protein modification; lipoprotein biosynthesis (signal peptide cleavage). Its function is as follows. This protein specifically catalyzes the removal of signal peptides from prolipoproteins. The polypeptide is Lipoprotein signal peptidase (Halothermothrix orenii (strain H 168 / OCM 544 / DSM 9562)).